The following is a 254-amino-acid chain: DNA repair protein RecO (254 aa).

It belongs to the RecO family.

In terms of biological role, involved in DNA repair and RecF pathway recombination. This chain is DNA repair protein RecO, found in Anaeromyxobacter sp. (strain K).